The following is a 251-amino-acid chain: Putative F-box protein PP2-B12 (251 aa).

The F-box domain maps to M1–F46.

The chain is Putative F-box protein PP2-B12 (PP2B12) from Arabidopsis thaliana (Mouse-ear cress).